A 262-amino-acid chain; its full sequence is Acyl-[acyl-carrier-protein]--UDP-N-acetylglucosamine O-acyltransferase (262 aa).

It belongs to the transferase hexapeptide repeat family. LpxA subfamily. Homotrimer.

It localises to the cytoplasm. It catalyses the reaction a (3R)-hydroxyacyl-[ACP] + UDP-N-acetyl-alpha-D-glucosamine = a UDP-3-O-[(3R)-3-hydroxyacyl]-N-acetyl-alpha-D-glucosamine + holo-[ACP]. Its pathway is glycolipid biosynthesis; lipid IV(A) biosynthesis; lipid IV(A) from (3R)-3-hydroxytetradecanoyl-[acyl-carrier-protein] and UDP-N-acetyl-alpha-D-glucosamine: step 1/6. Its function is as follows. Involved in the biosynthesis of lipid A, a phosphorylated glycolipid that anchors the lipopolysaccharide to the outer membrane of the cell. The chain is Acyl-[acyl-carrier-protein]--UDP-N-acetylglucosamine O-acyltransferase from Salmonella dublin (strain CT_02021853).